The chain runs to 84 residues: ATP synthase subunit c (84 aa).

The next 2 helical transmembrane spans lie at 21 to 38 (ALGAAIAVIGAGIGIGKI) and 60 to 80 (MIIIAALVEGVALIAIIVCLL).

This sequence belongs to the ATPase C chain family. As to quaternary structure, F-type ATPases have 2 components, F(1) - the catalytic core - and F(0) - the membrane proton channel. F(1) has five subunits: alpha(3), beta(3), gamma(1), delta(1), epsilon(1). F(0) has three main subunits: a(1), b(2) and c(10-14). The alpha and beta chains form an alternating ring which encloses part of the gamma chain. F(1) is attached to F(0) by a central stalk formed by the gamma and epsilon chains, while a peripheral stalk is formed by the delta and b chains.

The protein resides in the cell inner membrane. Its function is as follows. F(1)F(0) ATP synthase produces ATP from ADP in the presence of a proton or sodium gradient. F-type ATPases consist of two structural domains, F(1) containing the extramembraneous catalytic core and F(0) containing the membrane proton channel, linked together by a central stalk and a peripheral stalk. During catalysis, ATP synthesis in the catalytic domain of F(1) is coupled via a rotary mechanism of the central stalk subunits to proton translocation. Key component of the F(0) channel; it plays a direct role in translocation across the membrane. A homomeric c-ring of between 10-14 subunits forms the central stalk rotor element with the F(1) delta and epsilon subunits. This Phocaeicola vulgatus (strain ATCC 8482 / DSM 1447 / JCM 5826 / CCUG 4940 / NBRC 14291 / NCTC 11154) (Bacteroides vulgatus) protein is ATP synthase subunit c.